Consider the following 139-residue polypeptide: Small ribosomal subunit protein uS12m (139 aa).

A mitochondrion-targeting transit peptide spans 1–29 (MSWSGPLRGLNTSLTCGPALVPRLWATCS). Positions 36–56 (MHRLGGPPKRPPQKLGPTEGR) are disordered.

It belongs to the universal ribosomal protein uS12 family. In terms of assembly, component of the mitochondrial ribosome small subunit (28S) which comprises a 12S rRNA and about 30 distinct proteins.

Its subcellular location is the mitochondrion. The chain is Small ribosomal subunit protein uS12m (MRPS12) from Pongo abelii (Sumatran orangutan).